A 370-amino-acid chain; its full sequence is MTIAAAPPSSRFRGVRIWLTLVAALIAVMVLVGGATRLTESGLSIVEWKPVTGSLPPLTETQWHTAFDGYKQIPQYRELNAGMTLDQFKTIFWWEWSHRLLGRVIGIVYLLPFLWFLWRGAIGPEWKRALWIIFALGALQGAVGWWMVASGLSQRTEVSQVRLATHLSLALIIYAAIVWTLRRMADRARVAAPARLKVTALALLGLTFVQLYAGALVAGLRAGRLYNTWPMIDGALIPDAARLWFESPWWKNLFDNHLTVQFDHRMLAYALWTLAALHMIDALRTRAGAAARGAVLLFLALTVQAALGIFTVLYAAPIDLALAHQAMALVVLTLAVLQAERLTATREDRTALGRGAAGRLAVPSELFPSA.

The next 8 helical transmembrane spans lie at 15 to 35 (VRIWLTLVAALIAVMVLVGGA), 104 to 124 (VIGIVYLLPFLWFLWRGAIGP), 129 to 149 (ALWIIFALGALQGAVGWWMVA), 161 to 181 (VRLATHLSLALIIYAAIVWTL), 200 to 220 (ALALLGLTFVQLYAGALVAGL), 261 to 280 (QFDHRMLAYALWTLAALHMI), 293 to 313 (GAVLLFLALTVQAALGIFTVL), and 317 to 337 (PIDLALAHQAMALVVLTLAVL). His-264 serves as a coordination point for heme. His-324 is a heme binding site.

Belongs to the COX15/CtaA family. Type 2 subfamily. In terms of assembly, interacts with CtaB. It depends on heme b as a cofactor.

The protein localises to the cell membrane. It carries out the reaction Fe(II)-heme o + 2 A + H2O = Fe(II)-heme a + 2 AH2. It functions in the pathway porphyrin-containing compound metabolism; heme A biosynthesis; heme A from heme O: step 1/1. In terms of biological role, catalyzes the conversion of heme O to heme A by two successive hydroxylations of the methyl group at C8. The first hydroxylation forms heme I, the second hydroxylation results in an unstable dihydroxymethyl group, which spontaneously dehydrates, resulting in the formyl group of heme A. The protein is Heme A synthase of Rhodopseudomonas palustris (strain TIE-1).